We begin with the raw amino-acid sequence, 92 residues long: uncharacterized protein (92 aa).

This is an uncharacterized protein from Escherichia coli (strain K12).